A 174-amino-acid chain; its full sequence is Chorion protein S18 (174 aa).

The signal sequence occupies residues 1-17 (MMKFMCIFICAVAAVSA). The span at 154-165 (AAAASSSVAGVA) shows a compositional bias: low complexity. The segment at 154 to 174 (AAAASSSVAGVAKKGYRKSSY) is disordered.

It belongs to the chorion protein S15/S18 family.

Its subcellular location is the secreted. In terms of biological role, chorion membrane (egg shell) protein; plays a role in protecting the egg from the environment. This chain is Chorion protein S18 (Cp18), found in Drosophila subobscura (Fruit fly).